The sequence spans 396 residues: G-protein coupled receptor 84 (396 aa).

Residues 1-26 (MWNSSDANFSCYHESVLGYRYVAVSW) are Extracellular-facing. Residues N3 and N8 are each glycosylated (N-linked (GlcNAc...) asparagine). The helical transmembrane segment at 27-47 (GVVVAVTGTVGNVLTLLALAI) threads the bilayer. Topologically, residues 48-57 (QPKLRTRFNL) are cytoplasmic. A helical membrane pass occupies residues 58–78 (LIANLTLADLLYCTLLQPFSV). Topologically, residues 79 to 94 (DTYLHLHWRTGATFCR) are extracellular. Residues 95–115 (VFGLLLFASNSVSILTLCLIA) form a helical membrane-spanning segment. The Cytoplasmic segment spans residues 116 to 144 (LGRYLLIAHPKLFPQVFSAKGIVLALVST). The chain crosses the membrane as a helical span at residues 145 to 165 (WVVGVASFAPLWPIYILVPVV). The Extracellular portion of the chain corresponds to 166-180 (CTCSFDRIRGRPYTT). Residues 181-201 (ILMGIYFVLGLSSVGIFYCLI) traverse the membrane as a helical segment. Topologically, residues 202–320 (HRQVKRAAQA…SSEFGKVTRM (119 aa)) are cytoplasmic. Phosphoserine occurs at positions 221 and 224. A disordered region spans residues 244–311 (RLASGGPSEG…KGARRAPDSS (68 aa)). The span at 247 to 260 (SGGPSEGISSEPVS) shows a compositional bias: low complexity. 2 positions are modified to phosphothreonine: T263 and T264. The chain crosses the membrane as a helical span at residues 321 to 341 (CFAVFLCFALSYIPFLLLNIL). Residues 342 to 352 (DARVQAPRVVH) lie on the Extracellular side of the membrane. Residues 353 to 373 (MLAANLTWLNGCINPVLYAAM) traverse the membrane as a helical segment. Residues 374 to 396 (NRQFRQAYGSILKRGPRSFHRLH) are Cytoplasmic-facing.

The protein belongs to the G-protein coupled receptor 1 family. In terms of assembly, interacts with ARRB2 and ARR3. Phosphorylated by a subset of GPR84-activating ligands. Constitutively phosphorylated at Ser-221 and Ser-224 in the absence of 2-HTP. By contrast, Thr-263 and Thr-264 are phosphorylated only following prior cell treatment with 2-HTP. As to expression, expressed predominantly in hematopoietic tissues. High levels detected in the bone marrow and lower levels in the peripheral leukocytes and lung. Also expressed in brain, heart, muscle, colon, thymus, spleen, kidney, liver, placenta and intestine. Within the leukocyte population expression is higher in neutrophils and eosinophils relative to T- or B-lymphocytes.

The protein resides in the cell membrane. G protein-coupled receptor that responds endogenously to dietary fatty acids or nutrient, specifically medium-chain free fatty acid (FFA) with carbon chain lengths of C9 to C14. Capric acid (C10:0), undecanoic acid (C11:0) and lauric acid (C12:0) are the most potent agonists. In immune cells, functions as a pro-inflammatory receptor via 6-OAU and promotes the expression of pro-inflammatory mediators such as TNFalpha, IL-6 and IL-12B as well as stimulating chemotactic responses through activation of signaling mediators AKT, ERK and NF-kappa-B. In addition, triggers increased bacterial adhesion and phagocytosis in macrophages and regulates pro-inflammatory function via enhancing NLRP3 inflammasome activation. Also plays an important role in inflammation by modulating neutrophil functions. Mechanistically, promotes neutrophil chemotaxis, reactive oxygen species (ROS) production and degranulation via LYN-AKT/ERK pathway. To regulate ROS, communicates with the two formyl peptide receptors FPR2 and FPR1 to control the NADPH oxidase activity in neutrophils. The sequence is that of G-protein coupled receptor 84 (GPR84) from Homo sapiens (Human).